The sequence spans 105 residues: Nucleoid-associated protein MW0434 (105 aa).

Residues methionine 1–isoleucine 33 form a disordered region. Residues methionine 7–lysine 16 are compositionally biased toward low complexity. Residues methionine 21–isoleucine 33 are compositionally biased toward basic and acidic residues.

It belongs to the YbaB/EbfC family. As to quaternary structure, homodimer.

The protein localises to the cytoplasm. It localises to the nucleoid. Its function is as follows. Binds to DNA and alters its conformation. May be involved in regulation of gene expression, nucleoid organization and DNA protection. The sequence is that of Nucleoid-associated protein MW0434 from Staphylococcus aureus (strain MW2).